The sequence spans 412 residues: Alpha-2,8-sialyltransferase 8E (412 aa).

Over 1 to 16 the chain is Cytoplasmic; the sequence is MRYADPSANRDLLGNR. A helical; Signal-anchor for type II membrane protein transmembrane segment spans residues 17 to 37; sequence TLLFIFICAFALVTLLQQILY. At 38 to 412 the chain is on the lumenal side; sequence SKSYIKRGFQ…RVHTGTCNCC (375 aa). Residues Asn-58, Asn-64, Asn-73, and Asn-92 are each glycosylated (N-linked (GlcNAc...) asparagine). Intrachain disulfides connect Cys-200-Cys-349 and Cys-214-Cys-409. Substrate-binding positions include Asn-228 and 250–252; that span reads NPS. Asn-277 carries N-linked (GlcNAc...) asparagine glycosylation. 336–338 serves as a coordination point for substrate; it reads STG. The active-site Proton donor/acceptor is His-384.

It belongs to the glycosyltransferase 29 family. As to expression, highly expressed in brain. Expressed at low levels in other tissues, including liver, testis, lung, placenta and spleen.

The protein resides in the golgi apparatus membrane. The enzyme catalyses a ganglioside GT1b (d18:1(4E)) + CMP-N-acetyl-beta-neuraminate = a ganglioside GQ1b (d18:1(4E)) + CMP + H(+). It catalyses the reaction a ganglioside GD3 (d18:1(4E)) + CMP-N-acetyl-beta-neuraminate = a ganglioside GT3 (d18:1(4E)) + CMP + H(+). The catalysed reaction is a ganglioside GD1a (d18:1(4E)) + CMP-N-acetyl-beta-neuraminate = a ganglioside GT1a (d18:1(4E)) + CMP + H(+). It carries out the reaction a ganglioside GM1b (d18:1(4E)) + CMP-N-acetyl-beta-neuraminate = a ganglioside GD1c (d18:1(4E)) + CMP + H(+). The enzyme catalyses a ganglioside GQ1c (d18:1(4E)) + CMP-N-acetyl-beta-neuraminate = a ganglioside GP1c (d18:1(4E)) + CMP + H(+). Its pathway is protein modification; protein glycosylation. Its function is as follows. Involved in the synthesis of gangliosides GD1c, GT1a, GQ1b, GP1c and GT3 from GD1a, GT1b, GM1b and GD3 respectively. The protein is Alpha-2,8-sialyltransferase 8E of Mus musculus (Mouse).